The sequence spans 79 residues: MSLRHLAQIITQQIILPYLQINVDPNIAPHRIPYFEFDTKEYEDLSVFADAIPKLTGIGVQISESWVWDKLGIPEPQEG.

This is an uncharacterized protein from Haemophilus influenzae (strain ATCC 51907 / DSM 11121 / KW20 / Rd).